The primary structure comprises 821 residues: Lysosomal beta glucosidase (821 aa).

The N-terminal stretch at 1-24 (MKTIKSLFLLSLLIVNLLISSTYG) is a signal peptide. Positions 25 to 69 (SSIRVSIVGGEEAEVIEKPRTFGNKRELKLEYSQIYPKKQLNQEN) are excised as a propeptide. 3 N-linked (GlcNAc...) asparagine glycosylation sites follow: Asn113, Asn146, and Asn266. Asp363 is a catalytic residue. Residues Asn535, Asn555, Asn703, and Asn721 are each glycosylated (N-linked (GlcNAc...) asparagine).

It belongs to the glycosyl hydrolase 3 family. Glycosylated. The polyoligosaccharides are of the high-mannose type and are highly substituted with both phosphate and sulfate moieties.

The protein resides in the lysosome. It catalyses the reaction Hydrolysis of terminal, non-reducing beta-D-glucosyl residues with release of beta-D-glucose.. The polypeptide is Lysosomal beta glucosidase (gluA) (Dictyostelium discoideum (Social amoeba)).